Here is a 157-residue protein sequence, read N- to C-terminus: UPF0179 protein Mhun_1135 (157 aa).

The protein belongs to the UPF0179 family.

The polypeptide is UPF0179 protein Mhun_1135 (Methanospirillum hungatei JF-1 (strain ATCC 27890 / DSM 864 / NBRC 100397 / JF-1)).